Here is a 355-residue protein sequence, read N- to C-terminus: Mu-like prophage FluMu protein gp47 (355 aa).

Belongs to the Mu gp47/PBSX XkdT family.

This chain is Mu-like prophage FluMu protein gp47, found in Haemophilus influenzae (strain ATCC 51907 / DSM 11121 / KW20 / Rd).